The following is a 212-amino-acid chain: ATP-dependent dethiobiotin synthetase BioD (212 aa).

Residue 12 to 17 participates in ATP binding; that stretch reads DCGKTF. Thr16 is a binding site for Mg(2+). Residue Lys33 is part of the active site. Ser37 provides a ligand contact to substrate. Residues Asp50, 110–113, and 170–171 contribute to the ATP site; these read EGAG and NC. Mg(2+) is bound by residues Asp50 and Glu110.

This sequence belongs to the dethiobiotin synthetase family. As to quaternary structure, homodimer. The cofactor is Mg(2+).

Its subcellular location is the cytoplasm. It catalyses the reaction (7R,8S)-7,8-diammoniononanoate + CO2 + ATP = (4R,5S)-dethiobiotin + ADP + phosphate + 3 H(+). Its pathway is cofactor biosynthesis; biotin biosynthesis; biotin from 7,8-diaminononanoate: step 1/2. Catalyzes a mechanistically unusual reaction, the ATP-dependent insertion of CO2 between the N7 and N8 nitrogen atoms of 7,8-diaminopelargonic acid (DAPA, also called 7,8-diammoniononanoate) to form a ureido ring. The polypeptide is ATP-dependent dethiobiotin synthetase BioD (Legionella pneumophila (strain Corby)).